The sequence spans 842 residues: Protein translocase subunit SecA 1 (842 aa).

ATP is bound by residues glutamine 85, 103 to 107 (GEGKT), and aspartate 493. The Zn(2+) site is built by cysteine 824, cysteine 826, cysteine 835, and histidine 836.

Belongs to the SecA family. In terms of assembly, monomer and homodimer. Part of the essential Sec protein translocation apparatus which comprises SecA, SecYEG and auxiliary proteins SecDF. Other proteins may also be involved. Zn(2+) is required as a cofactor.

It localises to the cell membrane. Its subcellular location is the cytoplasm. It carries out the reaction ATP + H2O + cellular proteinSide 1 = ADP + phosphate + cellular proteinSide 2.. In terms of biological role, part of the Sec protein translocase complex. Interacts with the SecYEG preprotein conducting channel. Has a central role in coupling the hydrolysis of ATP to the transfer of proteins into and across the cell membrane, serving as an ATP-driven molecular motor driving the stepwise translocation of polypeptide chains across the membrane. The polypeptide is Protein translocase subunit SecA 1 (Streptococcus agalactiae serotype Ia (strain ATCC 27591 / A909 / CDC SS700)).